The following is a 199-amino-acid chain: uncharacterized protein (199 aa).

The signal sequence occupies residues 1–23 (MKPGCTLFFLLCSALTVTTEAHA).

This is an uncharacterized protein from Escherichia coli (strain K12).